The following is a 164-amino-acid chain: Transcriptional regulator MraZ (164 aa).

SpoVT-AbrB domains lie at 7-63 and 92-135; these read REQH…EPAV and LDQL…NPDR.

It belongs to the MraZ family. As to quaternary structure, forms oligomers.

It localises to the cytoplasm. It is found in the nucleoid. This is Transcriptional regulator MraZ from Chlorobaculum parvum (strain DSM 263 / NCIMB 8327) (Chlorobium vibrioforme subsp. thiosulfatophilum).